We begin with the raw amino-acid sequence, 423 residues long: 26S proteasome regulatory subunit 6B homolog (423 aa).

207–214 contributes to the ATP binding site; that stretch reads GPPGTGKT.

Belongs to the AAA ATPase family.

It localises to the cytoplasm. The protein localises to the nucleus. In terms of biological role, the 26S proteasome is involved in the ATP-dependent degradation of ubiquitinated proteins. The regulatory (or ATPase) complex confers ATP dependency and substrate specificity to the 26S complex. In Aspergillus niger, this protein is 26S proteasome regulatory subunit 6B homolog (tbpA).